The sequence spans 295 residues: Aquaporin-9 (295 aa).

Residues 1 to 24 lie on the Cytoplasmic side of the membrane; it reads MPSEKDRAKKNLVQRLALKSCLAK. The chain crosses the membrane as a helical span at residues 25 to 43; it reads ETLSEFLGTFIMIVLGCGS. The Extracellular segment spans residues 44-57; the sequence is IAQAVLSREKAGGI. Residues 58-77 form a helical membrane-spanning segment; it reads ITINIGFATAVVMALYATFG. Residues 78–79 lie on the Cytoplasmic side of the membrane; it reads VS. The segment at residues 80-92 is an intramembrane region (discontinuously helical); it reads GGHINPAVSFAMC. The NPA 1 motif lies at 84–86; that stretch reads NPA. The Cytoplasmic segment spans residues 93 to 98; that stretch reads TFGRME. Residues 99–123 traverse the membrane as a helical segment; the sequence is WFKFPFYVGAQLLGAFVGAATVFGI. The Extracellular segment spans residues 124–160; that stretch reads YYDGLMAFADGKLLITGENGTAFIFATYPKPFVSVPG. The chain crosses the membrane as a helical span at residues 161–178; it reads AFVDQVVSTMFLLLIVFA. Residues 179–190 are Cytoplasmic-facing; it reads IFDSRNLGVPRG. Residues 191–207 form a helical membrane-spanning segment; the sequence is LEPIVIGLLIIVISCSL. Over 208-210 the chain is Extracellular; it reads GLN. The discontinuously helical intramembrane region spans 211-225; the sequence is SGCAMNPARDLSPRL. An NPA 2 motif is present at residues 216-218; it reads NPA. Residues 226-243 are Extracellular-facing; the sequence is FTALAGWGFEVFTFGNNF. A helical transmembrane segment spans residues 244–264; it reads WWIPVVGPMIGAVLGGLIYVL. Residues 265–295 lie on the Cytoplasmic side of the membrane; sequence FIQMHHSNPDPEVKAEPAENNLEKHELSVIM.

It belongs to the MIP/aquaporin (TC 1.A.8) family. In terms of assembly, homotetramer; each monomer provides an independent glycerol/water pore.

The protein localises to the cell membrane. It localises to the basolateral cell membrane. The enzyme catalyses glycerol(in) = glycerol(out). It carries out the reaction H2O(in) = H2O(out). It catalyses the reaction urea(in) = urea(out). The catalysed reaction is (S)-lactate(in) = (S)-lactate(out). The enzyme catalyses NH4(+)(in) = NH4(+)(out). It carries out the reaction uracil(in) = uracil(out). It catalyses the reaction adenine(out) = adenine(in). The catalysed reaction is 3-hydroxybutanoate(in) = 3-hydroxybutanoate(out). The enzyme catalyses D-sorbitol(in) = D-sorbitol(out). It carries out the reaction D-mannitol(in) = D-mannitol(out). It catalyses the reaction H2O2(out) = H2O2(in). The catalysed reaction is arsenite(in) = arsenite(out). The enzyme catalyses selenite(in) = selenite(out). Functionally, aquaglyceroporins form homotetrameric transmembrane channels, with each monomer independently mediating glycerol and water transport across the plasma membrane along their osmotic gradient. AQP9 is the primary route for glycerol uptake in hepatocytes, supporting hepatic gluconeogenesis. It exhibits broad specificity and may transport various small, non-charged solutes, including carbamides, polyols, purines, and pyrimidines. AQP9 may also facilitate hepatic urea extrusion. Due to its permeability to lactate, AQP9 might participate in the astrocyte-to-neuron lactate shuttle, supplying neurons with energy. Additionally, AQP9 is permeable to arsenite, contributing to arsenic excretion by the liver and providing partial protection against arsenic toxicity. It is also permeable to H2O2 in vivo. Could also be permeable to ammonium. This chain is Aquaporin-9, found in Mus musculus (Mouse).